The primary structure comprises 188 residues: Elongation factor P (188 aa).

It belongs to the elongation factor P family.

The protein localises to the cytoplasm. It functions in the pathway protein biosynthesis; polypeptide chain elongation. In terms of biological role, involved in peptide bond synthesis. Stimulates efficient translation and peptide-bond synthesis on native or reconstituted 70S ribosomes in vitro. Probably functions indirectly by altering the affinity of the ribosome for aminoacyl-tRNA, thus increasing their reactivity as acceptors for peptidyl transferase. In Cellvibrio japonicus (strain Ueda107) (Pseudomonas fluorescens subsp. cellulosa), this protein is Elongation factor P.